A 93-amino-acid polypeptide reads, in one-letter code: Putative ribosomal protein eL43-like (93 aa).

A C4-type zinc finger spans residues 40-61 (CSFCGKTKMKRRAVKIRHCNSC).

The protein belongs to the eukaryotic ribosomal protein eL43 family.

In Homo sapiens (Human), this protein is Putative ribosomal protein eL43-like (RPL37AP8).